Here is a 275-residue protein sequence, read N- to C-terminus: NAD kinase (275 aa).

Asp-66 functions as the Proton acceptor in the catalytic mechanism. NAD(+) is bound by residues 66-67 (DG), His-71, 135-136 (NE), Lys-146, Arg-163, Asp-165, and 176-181 (TAYAMS).

This sequence belongs to the NAD kinase family. The cofactor is a divalent metal cation.

It localises to the cytoplasm. The enzyme catalyses NAD(+) + ATP = ADP + NADP(+) + H(+). Involved in the regulation of the intracellular balance of NAD and NADP, and is a key enzyme in the biosynthesis of NADP. Catalyzes specifically the phosphorylation on 2'-hydroxyl of the adenosine moiety of NAD to yield NADP. The sequence is that of NAD kinase from Methanosphaera stadtmanae (strain ATCC 43021 / DSM 3091 / JCM 11832 / MCB-3).